Consider the following 203-residue polypeptide: Histidine biosynthesis bifunctional protein HisIE (203 aa).

Residues 1-114 (MLTEQQRREL…FGDTAHQWLF (114 aa)) are phosphoribosyl-AMP cyclohydrolase. A phosphoribosyl-ATP pyrophosphohydrolase region spans residues 115-203 (LYQLEQLLAE…VIENLRKRHQ (89 aa)).

It in the N-terminal section; belongs to the PRA-CH family. This sequence in the C-terminal section; belongs to the PRA-PH family.

The protein resides in the cytoplasm. The catalysed reaction is 1-(5-phospho-beta-D-ribosyl)-ATP + H2O = 1-(5-phospho-beta-D-ribosyl)-5'-AMP + diphosphate + H(+). It carries out the reaction 1-(5-phospho-beta-D-ribosyl)-5'-AMP + H2O = 1-(5-phospho-beta-D-ribosyl)-5-[(5-phospho-beta-D-ribosylamino)methylideneamino]imidazole-4-carboxamide. It participates in amino-acid biosynthesis; L-histidine biosynthesis; L-histidine from 5-phospho-alpha-D-ribose 1-diphosphate: step 2/9. Its pathway is amino-acid biosynthesis; L-histidine biosynthesis; L-histidine from 5-phospho-alpha-D-ribose 1-diphosphate: step 3/9. The chain is Histidine biosynthesis bifunctional protein HisIE (hisI) from Escherichia coli (strain K12).